The following is a 161-amino-acid chain: Tropomyosin (161 aa).

Residues 1–161 adopt a coiled-coil conformation; the sequence is MDKLREKINA…DEVHQALEDL (161 aa). Positions 40–52 are enriched in basic and acidic residues; it reads EQEYESLSRKSEA. Disordered stretches follow at residues 40 to 65 and 107 to 134; these read EQEY…EETK and EKMR…DDME.

Homodimer.

It is found in the cytoplasm. The protein localises to the cytoskeleton. Functionally, forms part of the F-actin contractile ring during cytokinesis. This chain is Tropomyosin (cdc8), found in Schizosaccharomyces pombe (strain 972 / ATCC 24843) (Fission yeast).